Consider the following 394-residue polypeptide: Nuclear pore glycoprotein p62 (394 aa).

Tandem repeats lie at residues 22-23 (FG), 50-51 (FG), 75-76 (FG), 77-78 (FG), and 116-117 (FG). Positions 22 to 117 (FGLSTGTPAA…GTSAAPPAFG (96 aa)) are 5 X 2 AA repeats of F-G. Low complexity predominate over residues 45-57 (KTTFSFGTPAPTA). Positions 45–73 (KTTFSFGTPAPTAGIGGGDADNSKAQAPP) are disordered. Residues 211–341 (SYHQLEEHIN…DNLNEANKGQ (131 aa)) adopt a coiled-coil conformation.

Belongs to the nucleoporin NSP1/NUP62 family. Expressed in adult male accessory glands (at protein level).

The protein localises to the nucleus. Its subcellular location is the chromosome. It localises to the nucleus envelope. The protein resides in the nuclear pore complex. It is found in the cytoplasm. The protein localises to the cytoskeleton. Its subcellular location is the spindle pole. It localises to the microtubule organizing center. The protein resides in the centrosome. Essential component of the nuclear pore complex. The N-terminal is probably involved in nucleocytoplasmic transport. The C-terminal is involved in protein-protein interaction probably via coiled-coil formation, promotes its association with centrosomes and may function in anchorage of Nup62 to the pore complex. Binds to transcriptionally active genes. Negatively regulates chromatin attachment to the nuclear envelope, probably by preventing chromatin tethering by Nup154. This Drosophila melanogaster (Fruit fly) protein is Nuclear pore glycoprotein p62.